The following is a 465-amino-acid chain: Ribulose bisphosphate carboxylase large chain (465 aa).

The residue at position 4 (lysine 4) is an N6,N6,N6-trimethyllysine. Substrate-binding residues include asparagine 113 and threonine 163. The Proton acceptor role is filled by lysine 165. Lysine 167 is a binding site for substrate. Mg(2+)-binding residues include lysine 191, aspartate 193, and glutamate 194. N6-carboxylysine is present on lysine 191. Residue histidine 284 is the Proton acceptor of the active site. 3 residues coordinate substrate: arginine 285, histidine 317, and serine 369.

It belongs to the RuBisCO large chain family. Type I subfamily. In terms of assembly, heterohexadecamer of 8 large chains and 8 small chains; disulfide-linked. The disulfide link is formed within the large subunit homodimers. It depends on Mg(2+) as a cofactor. Post-translationally, the disulfide bond which can form in the large chain dimeric partners within the hexadecamer appears to be associated with oxidative stress and protein turnover.

Its subcellular location is the plastid. The protein resides in the chloroplast. It catalyses the reaction 2 (2R)-3-phosphoglycerate + 2 H(+) = D-ribulose 1,5-bisphosphate + CO2 + H2O. The enzyme catalyses D-ribulose 1,5-bisphosphate + O2 = 2-phosphoglycolate + (2R)-3-phosphoglycerate + 2 H(+). In terms of biological role, ruBisCO catalyzes two reactions: the carboxylation of D-ribulose 1,5-bisphosphate, the primary event in carbon dioxide fixation, as well as the oxidative fragmentation of the pentose substrate in the photorespiration process. Both reactions occur simultaneously and in competition at the same active site. The polypeptide is Ribulose bisphosphate carboxylase large chain (Cornus oblonga).